The chain runs to 92 residues: Large ribosomal subunit protein bL28 (92 aa).

Belongs to the bacterial ribosomal protein bL28 family.

The sequence is that of Large ribosomal subunit protein bL28 from Borrelia hermsii (strain HS1 / DAH).